Consider the following 689-residue polypeptide: 1,4-alpha-glucan-branching enzyme (689 aa).

Positions 93 and 128 each coordinate (1,4-alpha-D-glucosyl)n. Residue D345 is the Nucleophile of the active site. The Proton donor role is filled by E400.

It belongs to the glycosyl hydrolase 13 family. GlgB subfamily.

It localises to the cytoplasm. The catalysed reaction is Transfers a segment of a (1-&gt;4)-alpha-D-glucan chain to a primary hydroxy group in a similar glucan chain.. The protein operates within glycan biosynthesis; glycogen biosynthesis. Its function is as follows. Glycogen-branching enzyme participates in the glycogen biosynthetic process along with glycogenin and glycogen synthase. Generates alpha-1,6-glucosidic branches from alpha-1,4-linked glucose chains, to increase solubility of the glycogen polymer. This Aspergillus oryzae (strain ATCC 42149 / RIB 40) (Yellow koji mold) protein is 1,4-alpha-glucan-branching enzyme (gbeA).